Here is a 326-residue protein sequence, read N- to C-terminus: Acetyl-coenzyme A carboxylase carboxyl transferase subunit alpha (326 aa).

The region spanning 45-298 (LEARAMQLRE…KQVLLENLDE (254 aa)) is the CoA carboxyltransferase C-terminal domain.

It belongs to the AccA family. As to quaternary structure, acetyl-CoA carboxylase is a heterohexamer composed of biotin carboxyl carrier protein (AccB), biotin carboxylase (AccC) and two subunits each of ACCase subunit alpha (AccA) and ACCase subunit beta (AccD).

It is found in the cytoplasm. It catalyses the reaction N(6)-carboxybiotinyl-L-lysyl-[protein] + acetyl-CoA = N(6)-biotinyl-L-lysyl-[protein] + malonyl-CoA. The protein operates within lipid metabolism; malonyl-CoA biosynthesis; malonyl-CoA from acetyl-CoA: step 1/1. Component of the acetyl coenzyme A carboxylase (ACC) complex. First, biotin carboxylase catalyzes the carboxylation of biotin on its carrier protein (BCCP) and then the CO(2) group is transferred by the carboxyltransferase to acetyl-CoA to form malonyl-CoA. This is Acetyl-coenzyme A carboxylase carboxyl transferase subunit alpha from Nostoc punctiforme (strain ATCC 29133 / PCC 73102).